A 180-amino-acid chain; its full sequence is uncharacterized protein (180 aa).

An N-terminal signal peptide occupies residues 1 to 21; the sequence is MKQCIAFMAILALSLSAISEA. The tract at residues 23 to 81 is disordered; the sequence is GGRGVRSSGYSRPVATKPAPAPKQTQTQQQSQQPDATFGQQNMQNTATNTPNNPNNRLA. Over residues 27–78 the composition is skewed to low complexity; that stretch reads VRSSGYSRPVATKPAPAPKQTQTQQQSQQPDATFGQQNMQNTATNTPNNPNN.

This is an uncharacterized protein from Pasteurella multocida (strain Pm70).